A 123-amino-acid polypeptide reads, in one-letter code: Ribonuclease P protein component (123 aa).

It belongs to the RnpA family. In terms of assembly, consists of a catalytic RNA component (M1 or rnpB) and a protein subunit.

The enzyme catalyses Endonucleolytic cleavage of RNA, removing 5'-extranucleotides from tRNA precursor.. Its function is as follows. RNaseP catalyzes the removal of the 5'-leader sequence from pre-tRNA to produce the mature 5'-terminus. It can also cleave other RNA substrates such as 4.5S RNA. The protein component plays an auxiliary but essential role in vivo by binding to the 5'-leader sequence and broadening the substrate specificity of the ribozyme. The sequence is that of Ribonuclease P protein component from Streptomyces avermitilis (strain ATCC 31267 / DSM 46492 / JCM 5070 / NBRC 14893 / NCIMB 12804 / NRRL 8165 / MA-4680).